The primary structure comprises 191 residues: MSSAKPVLTFVTGNANKLKEVVAILGADFPFELRNQAVDLPELQGEPADIAKEKCRLAAKQVQGAVLVEDTSLCFNALKGLPGPYIKWFLEKTGHDGLNNMLAAYEDKSAYAQCIFAYAPAGAEPQVFVGQTHGKIVPARGPTTFGWDPVFQPDGFEQTYAEMEKVTKNQISHRYKALEALKTHLVKPVDK.

12–17 is a binding site for ITP; that stretch reads TGNANK. Glu-42 contacts Mg(2+). ITP contacts are provided by residues Lys-54, 70–71, Lys-87, 145–148, Lys-168, and 173–174; these read DT, FGWD, and HR.

This sequence belongs to the HAM1 NTPase family. As to quaternary structure, homodimer. Requires Mg(2+) as cofactor. The cofactor is Mn(2+).

The protein resides in the cytoplasm. The enzyme catalyses ITP + H2O = IMP + diphosphate + H(+). It carries out the reaction dITP + H2O = dIMP + diphosphate + H(+). The catalysed reaction is XTP + H2O = XMP + diphosphate + H(+). Its function is as follows. Pyrophosphatase that hydrolyzes non-canonical purine nucleotides such as inosine triphosphate (ITP), deoxyinosine triphosphate (dITP) or xanthosine 5'-triphosphate (XTP) to their respective monophosphate derivatives. The enzyme does not distinguish between the deoxy- and ribose forms. Probably excludes non-canonical purines from RNA and DNA precursor pools, thus preventing their incorporation into RNA and DNA and avoiding chromosomal lesions. This Phytophthora infestans (strain T30-4) (Potato late blight agent) protein is Inosine triphosphate pyrophosphatase.